Reading from the N-terminus, the 313-residue chain is 4-diphosphocytidyl-2-C-methyl-D-erythritol kinase (313 aa).

The active site involves Lys27. 110 to 120 (PIGGGVGGGSS) contacts ATP. Residue Asp152 is part of the active site.

This sequence belongs to the GHMP kinase family. IspE subfamily.

It catalyses the reaction 4-CDP-2-C-methyl-D-erythritol + ATP = 4-CDP-2-C-methyl-D-erythritol 2-phosphate + ADP + H(+). It participates in isoprenoid biosynthesis; isopentenyl diphosphate biosynthesis via DXP pathway; isopentenyl diphosphate from 1-deoxy-D-xylulose 5-phosphate: step 3/6. Catalyzes the phosphorylation of the position 2 hydroxy group of 4-diphosphocytidyl-2C-methyl-D-erythritol. This chain is 4-diphosphocytidyl-2-C-methyl-D-erythritol kinase, found in Histophilus somni (strain 129Pt) (Haemophilus somnus).